The sequence spans 330 residues: Methionyl-tRNA formyltransferase (330 aa).

121-124 is a (6S)-5,6,7,8-tetrahydrofolate binding site; sequence SLLP.

It belongs to the Fmt family.

It carries out the reaction L-methionyl-tRNA(fMet) + (6R)-10-formyltetrahydrofolate = N-formyl-L-methionyl-tRNA(fMet) + (6S)-5,6,7,8-tetrahydrofolate + H(+). In terms of biological role, attaches a formyl group to the free amino group of methionyl-tRNA(fMet). The formyl group appears to play a dual role in the initiator identity of N-formylmethionyl-tRNA by promoting its recognition by IF2 and preventing the misappropriation of this tRNA by the elongation apparatus. This Burkholderia cenocepacia (strain HI2424) protein is Methionyl-tRNA formyltransferase.